The primary structure comprises 243 residues: Probable transcriptional regulatory protein Bpet3099 (243 aa).

Positions 1-21 (MAGHSKWANIQHRKGRQDAKR) are disordered.

The protein belongs to the TACO1 family.

The protein localises to the cytoplasm. This chain is Probable transcriptional regulatory protein Bpet3099, found in Bordetella petrii (strain ATCC BAA-461 / DSM 12804 / CCUG 43448).